The following is a 209-amino-acid chain: dTTP/UTP pyrophosphatase (209 aa).

D88 serves as the catalytic Proton acceptor.

Belongs to the Maf family. YhdE subfamily. Requires a divalent metal cation as cofactor.

The protein localises to the cytoplasm. It carries out the reaction dTTP + H2O = dTMP + diphosphate + H(+). The catalysed reaction is UTP + H2O = UMP + diphosphate + H(+). In terms of biological role, nucleoside triphosphate pyrophosphatase that hydrolyzes dTTP and UTP. May have a dual role in cell division arrest and in preventing the incorporation of modified nucleotides into cellular nucleic acids. The polypeptide is dTTP/UTP pyrophosphatase (Burkholderia mallei (strain ATCC 23344)).